The primary structure comprises 701 residues: Polyribonucleotide nucleotidyltransferase (701 aa).

Positions 487 and 493 each coordinate Mg(2+). In terms of domain architecture, KH spans 554 to 613 (PTMIAMKIDTDKIRDVIGKGGATIRAICEETKASIDIEDDGSIKIFGETKEAAEAARQRV). The 69-residue stretch at 623–691 (GKIYVGKVER…NRGRIKLSIK (69 aa)) folds into the S1 motif domain.

The protein belongs to the polyribonucleotide nucleotidyltransferase family. As to quaternary structure, component of the RNA degradosome, which is a multiprotein complex involved in RNA processing and mRNA degradation. The cofactor is Mg(2+).

It is found in the cytoplasm. The enzyme catalyses RNA(n+1) + phosphate = RNA(n) + a ribonucleoside 5'-diphosphate. Its function is as follows. Involved in mRNA degradation. Catalyzes the phosphorolysis of single-stranded polyribonucleotides processively in the 3'- to 5'-direction. The polypeptide is Polyribonucleotide nucleotidyltransferase (Pseudomonas putida (strain W619)).